A 161-amino-acid chain; its full sequence is Small ribosomal subunit protein bS16 (161 aa).

The tract at residues 114-161 (EGGPTTEATKPKKKSPAKKAKGGEGDADAAAEKVEASAEGEQTESAES) is disordered. Over residues 124–133 (PKKKSPAKKA) the composition is skewed to basic residues.

The protein belongs to the bacterial ribosomal protein bS16 family.

This Mycobacterium marinum (strain ATCC BAA-535 / M) protein is Small ribosomal subunit protein bS16.